The following is a 329-amino-acid chain: MSVIFSGIQPSGTITLGNYLGAMKQFTELQNEHDCYFCIVNQHAITVPQDPVQLRKNIRSLAALYVACGIDPEKATLFVQSEVPAHAQLGWIMQSVAYVGELERMTQYKDKASGRDSVPAGLLTYPPLMAADILLYNTEIVPVGDDQKQHMELTRDLAERFNKRFREVFTIPEIRIPKVGARVMSLTEPTKKMSKSDPNPKSMISMLDEPKTIEKKIKSAVTDSEGIVKFDKENKPGISNLLTIYSSFSGKTVEEIEAMYEGKGYGDFKGDLAQVVVEAIRPIQDKYNELINSPELDEILDKGAEKANRVAFKQLRKVENAMGLSRKRR.

ATP-binding positions include 9–11 (QPS) and 17–18 (GN). A 'HIGH' region motif is present at residues 10-18 (PSGTITLGN). Asp-132 serves as a coordination point for L-tryptophan. ATP contacts are provided by residues 144 to 146 (GDD), Val-183, and 192 to 196 (KMSKS). A 'KMSKS' region motif is present at residues 192–196 (KMSKS).

The protein belongs to the class-I aminoacyl-tRNA synthetase family. As to quaternary structure, homodimer.

The protein resides in the cytoplasm. The enzyme catalyses tRNA(Trp) + L-tryptophan + ATP = L-tryptophyl-tRNA(Trp) + AMP + diphosphate + H(+). Its function is as follows. Catalyzes the attachment of tryptophan to tRNA(Trp). The chain is Tryptophan--tRNA ligase from Bacillus anthracis.